The primary structure comprises 292 residues: Homoserine kinase (292 aa).

80-90 (PLARGLGSSSS) serves as a coordination point for ATP.

Belongs to the GHMP kinase family. Homoserine kinase subfamily.

The protein localises to the cytoplasm. It carries out the reaction L-homoserine + ATP = O-phospho-L-homoserine + ADP + H(+). It participates in amino-acid biosynthesis; L-threonine biosynthesis; L-threonine from L-aspartate: step 4/5. Catalyzes the ATP-dependent phosphorylation of L-homoserine to L-homoserine phosphate. The sequence is that of Homoserine kinase from Leuconostoc mesenteroides subsp. mesenteroides (strain ATCC 8293 / DSM 20343 / BCRC 11652 / CCM 1803 / JCM 6124 / NCDO 523 / NBRC 100496 / NCIMB 8023 / NCTC 12954 / NRRL B-1118 / 37Y).